Consider the following 169-residue polypeptide: Disulfide bond formation protein B (169 aa).

Topologically, residues 1–13 are cytoplasmic; that stretch reads MSQLQQFCHNRFS. Residues 14–30 traverse the membrane as a helical segment; that stretch reads WGLLLLSAIGLELAALF. Over 31 to 48 the chain is Periplasmic; it reads FQYGMDLAPCVMCIYIRV. A disulfide bridge links Cys40 with Cys43. The helical transmembrane segment at 49–64 threads the bilayer; sequence AVLGIILAALIGILQP. Residues 65 to 71 lie on the Cytoplasmic side of the membrane; it reads KVWLLRL. The chain crosses the membrane as a helical span at residues 72-89; that stretch reads VGMAGWAVSAVWGFKLAY. Topologically, residues 90-144 are periplasmic; sequence ELNQMQVNPSPFATCSFYPEFPSFMPLDTWLPSVFSPTGMCSDSPWSWLSVSMAQ. Residues Cys104 and Cys130 are joined by a disulfide bond. A helical transmembrane segment spans residues 145-163; that stretch reads WMMLGFAIYGVIWLLMLLP. Topologically, residues 164-169 are cytoplasmic; it reads ALKSAK.

This sequence belongs to the DsbB family.

The protein resides in the cell inner membrane. Functionally, required for disulfide bond formation in some periplasmic proteins. Acts by oxidizing the DsbA protein. The polypeptide is Disulfide bond formation protein B (Shewanella frigidimarina (strain NCIMB 400)).